The primary structure comprises 85 residues: N.vectensis toxin 1 6 (85 aa).

Residues 1-20 form the signal peptide; the sequence is MASFKIVIVCLALLVAVACA. A propeptide spanning residues 21–36 is cleaved from the precursor; the sequence is RRRDMMSDDELDYHYS. 3 disulfide bridges follow: cysteine 42–cysteine 82, cysteine 44–cysteine 72, and cysteine 65–cysteine 83.

The protein belongs to the sea anemone sodium channel inhibitory toxin family. Type II subfamily. As to expression, expressed in ectodermal glands and in clumps outside of the extodermal layer. Is not expressed in nematocytes. In adult female tissues, shows similar expression levels in mesenteries (gametes-producing tissue), tentacles, pharynx and physa.

The protein localises to the secreted. Its function is as follows. Binds to site 3 of voltage-gated sodium channels and inhibits the inactivation process. Is highly active on DmNav1/TipE (drosophila) and is only extremely weakly active on rat Nav1.4-beta-1/SCN4A-SCN1B, and on human Nav1.5-beta-1/SCN5A-beta-1. This reveals high specificity for arthropod over mammalian channels. In vivo, when released into the medium, this recombinant toxin induces impaired swimming, paralysis and death of the crustacean A.nauplii within several hours. Also causes paralysis of cherry shrimps immediately after injection at very low doses. Its effect on zebrafish (D.rerio) larvae is also rapid, since it induces tail twitching accompanied by impaired swimming after 20 minutes and complete paralysis within 45 minutes. It has also been observed to cause death of zebrafish larvae within 1 hour. The polypeptide is N.vectensis toxin 1 6 (Nematostella vectensis (Starlet sea anemone)).